Reading from the N-terminus, the 257-residue chain is 4-hydroxy-tetrahydrodipicolinate reductase (257 aa).

Residues 7–12, D32, 91–93, and 115–118 each bind NAD(+); these read GAAGRM, GTT, and SPNF. The active-site Proton donor/acceptor is H147. H148 contributes to the (S)-2,3,4,5-tetrahydrodipicolinate binding site. K151 serves as the catalytic Proton donor. 157-158 is a (S)-2,3,4,5-tetrahydrodipicolinate binding site; that stretch reads GT.

The protein belongs to the DapB family.

Its subcellular location is the cytoplasm. The enzyme catalyses (S)-2,3,4,5-tetrahydrodipicolinate + NAD(+) + H2O = (2S,4S)-4-hydroxy-2,3,4,5-tetrahydrodipicolinate + NADH + H(+). The catalysed reaction is (S)-2,3,4,5-tetrahydrodipicolinate + NADP(+) + H2O = (2S,4S)-4-hydroxy-2,3,4,5-tetrahydrodipicolinate + NADPH + H(+). The protein operates within amino-acid biosynthesis; L-lysine biosynthesis via DAP pathway; (S)-tetrahydrodipicolinate from L-aspartate: step 4/4. Its function is as follows. Catalyzes the conversion of 4-hydroxy-tetrahydrodipicolinate (HTPA) to tetrahydrodipicolinate. The chain is 4-hydroxy-tetrahydrodipicolinate reductase from Archaeoglobus fulgidus (strain ATCC 49558 / DSM 4304 / JCM 9628 / NBRC 100126 / VC-16).